The sequence spans 233 residues: 7-cyano-7-deazaguanine synthase (233 aa).

Position 7–17 (Leu-7–Ser-17) interacts with ATP. Positions 195, 206, 209, and 212 each coordinate Zn(2+).

The protein belongs to the QueC family. Zn(2+) is required as a cofactor.

It catalyses the reaction 7-carboxy-7-deazaguanine + NH4(+) + ATP = 7-cyano-7-deazaguanine + ADP + phosphate + H2O + H(+). It participates in purine metabolism; 7-cyano-7-deazaguanine biosynthesis. Functionally, catalyzes the ATP-dependent conversion of 7-carboxy-7-deazaguanine (CDG) to 7-cyano-7-deazaguanine (preQ(0)). The chain is 7-cyano-7-deazaguanine synthase from Methanococcus maripaludis (strain DSM 14266 / JCM 13030 / NBRC 101832 / S2 / LL).